Reading from the N-terminus, the 158-residue chain is 2-C-methyl-D-erythritol 2,4-cyclodiphosphate synthase (158 aa).

The a divalent metal cation site is built by aspartate 9 and histidine 11. 4-CDP-2-C-methyl-D-erythritol 2-phosphate-binding positions include 9–11 and 35–36; these read DVH and HS. Histidine 43 is a binding site for a divalent metal cation. 4-CDP-2-C-methyl-D-erythritol 2-phosphate contacts are provided by residues 57 to 59, 62 to 66, 133 to 136, phenylalanine 140, and arginine 143; these read DIG, FPDTD, and TTTE.

The protein belongs to the IspF family. As to quaternary structure, homotrimer. A divalent metal cation serves as cofactor.

The catalysed reaction is 4-CDP-2-C-methyl-D-erythritol 2-phosphate = 2-C-methyl-D-erythritol 2,4-cyclic diphosphate + CMP. Its pathway is isoprenoid biosynthesis; isopentenyl diphosphate biosynthesis via DXP pathway; isopentenyl diphosphate from 1-deoxy-D-xylulose 5-phosphate: step 4/6. In terms of biological role, involved in the biosynthesis of isopentenyl diphosphate (IPP) and dimethylallyl diphosphate (DMAPP), two major building blocks of isoprenoid compounds. Catalyzes the conversion of 4-diphosphocytidyl-2-C-methyl-D-erythritol 2-phosphate (CDP-ME2P) to 2-C-methyl-D-erythritol 2,4-cyclodiphosphate (ME-CPP) with a corresponding release of cytidine 5-monophosphate (CMP). The polypeptide is 2-C-methyl-D-erythritol 2,4-cyclodiphosphate synthase (Actinobacillus pleuropneumoniae serotype 5b (strain L20)).